A 405-amino-acid chain; its full sequence is 3-hydroxy-3-methylglutaryl-coenzyme A reductase (405 aa).

Catalysis depends on charge relay system residues Glu101 and Asp305. His400 functions as the Proton donor in the catalytic mechanism.

Belongs to the HMG-CoA reductase family. As to quaternary structure, homodimer.

The protein resides in the cytoplasm. The catalysed reaction is (R)-mevalonate + 2 NADP(+) + CoA = (3S)-3-hydroxy-3-methylglutaryl-CoA + 2 NADPH + 2 H(+). Its pathway is metabolic intermediate biosynthesis; (R)-mevalonate biosynthesis; (R)-mevalonate from acetyl-CoA: step 3/3. Is competitively inhibited by lovastatin (formerly called mevinolin). Lovastatin also blocks the growth of H.salinarum, and this effect is reversed by addition of mevalonate, indicating the critical role that the mevalonate pathway plays in isoprenoid biosynthesis by these archaea. In terms of biological role, catalyzes the NADPH-dependent reductive deacylation of (S)-3-hydroxy-3-methylglutaryl-CoA (HMG-CoA) to (R)-mevalonate. Cannot use NADH instead of NADPH. Functions in the mevalonate (MVA) pathway leading to isopentenyl diphosphate (IPP), a key precursor for the biosynthesis of isoprenoid compounds such as archaeal membrane lipids. The polypeptide is 3-hydroxy-3-methylglutaryl-coenzyme A reductase (hmgA) (Halobacterium salinarum (strain ATCC 29341 / DSM 671 / R1)).